The following is a 106-amino-acid chain: UPF0145 protein PFL_3418 (106 aa).

Belongs to the UPF0145 family.

The chain is UPF0145 protein PFL_3418 from Pseudomonas fluorescens (strain ATCC BAA-477 / NRRL B-23932 / Pf-5).